The primary structure comprises 377 residues: MSDGIVIIGSGFAARQLVKNIRKQDAQIPLTLIAADSMDEYNKPDLSHVISRGQKADDLTLQSAGEFAEQYTLRLFPHTWVSDIDAENRLVKSHDNQWRYDKLVLATGATPFIPSVPGRELMLTLNSQREYGAAQSQLHDAKRVLIVGGGLIGCELAMDFCRAGKAVTVVDNSASVLAALMPPEASSRLQHRLTEMGVHLMLKTQLEGLEQTADGIRVSLDRQRAITVDAVVAAAGLRPETSLARHAGLQINRGIVVNSQLQTSDPAIYALGDCAEINGVVLPFLQPILLSAMCLSKNLLAQAGELKLPPMLVKVKTPDLPLHLAGDTRRDDLTWNIVAAKEGLVAKGVDAENQLRAFVVSEDKMKEAFALLKQLVS.

This sequence belongs to the FAD-dependent oxidoreductase family. FAD is required as a cofactor.

The protein resides in the cytoplasm. It carries out the reaction 2 reduced [nitric oxide reductase rubredoxin domain] + NAD(+) + H(+) = 2 oxidized [nitric oxide reductase rubredoxin domain] + NADH. It participates in nitrogen metabolism; nitric oxide reduction. Its function is as follows. One of at least two accessory proteins for anaerobic nitric oxide (NO) reductase. Reduces the rubredoxin moiety of NO reductase. The sequence is that of Nitric oxide reductase FlRd-NAD(+) reductase from Klebsiella pneumoniae subsp. pneumoniae (strain ATCC 700721 / MGH 78578).